The following is a 1042-amino-acid chain: Carbamoyl phosphate synthase large chain (1042 aa).

Positions 1-417 are carboxyphosphate synthetic domain; it reads MTEDSRTILL…SLLKALRSSE (417 aa). Residues R127, R182, G188, G189, E221, I223, E228, G254, I255, H256, Q297, and E314 each coordinate ATP. The 213-residue stretch at 131-343 folds into the ATP-grasp 1 domain; that stretch reads RQRMADLGQP…IARVTAKVAL (213 aa). Residues Q297, E314, and N316 each coordinate Mg(2+). Mn(2+) contacts are provided by Q297, E314, and N316. Positions 418–558 are oligomerization domain; sequence YDPSVDWATV…SQGSTGSDVR (141 aa). Positions 559 to 947 are carbamoyl phosphate synthetic domain; the sequence is ADRDAHSVVI…WKAQVAASNA (389 aa). Positions 689–880 constitute an ATP-grasp 2 domain; sequence NRLLDERDIS…IAKLAAKVMA (192 aa). ATP-binding residues include R725, E764, L766, E771, G796, V797, H798, S799, Q839, and E851. Mg(2+)-binding residues include Q839, E851, and N853. Q839, E851, and N853 together coordinate Mn(2+). The region spanning 947-1042 is the MGS-like domain; it reads APVPGSTAVV…DRPVNDETWG (96 aa). The interval 948–1042 is allosteric domain; that stretch reads PVPGSTAVVD…DRPVNDETWG (95 aa).

The protein belongs to the CarB family. Composed of two chains; the small (or glutamine) chain promotes the hydrolysis of glutamine to ammonia, which is used by the large (or ammonia) chain to synthesize carbamoyl phosphate. Tetramer of heterodimers (alpha,beta)4. Mg(2+) is required as a cofactor. The cofactor is Mn(2+).

It carries out the reaction hydrogencarbonate + L-glutamine + 2 ATP + H2O = carbamoyl phosphate + L-glutamate + 2 ADP + phosphate + 2 H(+). The enzyme catalyses hydrogencarbonate + NH4(+) + 2 ATP = carbamoyl phosphate + 2 ADP + phosphate + 2 H(+). The protein operates within amino-acid biosynthesis; L-arginine biosynthesis; carbamoyl phosphate from bicarbonate: step 1/1. It participates in pyrimidine metabolism; UMP biosynthesis via de novo pathway; (S)-dihydroorotate from bicarbonate: step 1/3. Large subunit of the glutamine-dependent carbamoyl phosphate synthetase (CPSase). CPSase catalyzes the formation of carbamoyl phosphate from the ammonia moiety of glutamine, carbonate, and phosphate donated by ATP, constituting the first step of 2 biosynthetic pathways, one leading to arginine and/or urea and the other to pyrimidine nucleotides. The large subunit (synthetase) binds the substrates ammonia (free or transferred from glutamine from the small subunit), hydrogencarbonate and ATP and carries out an ATP-coupled ligase reaction, activating hydrogencarbonate by forming carboxy phosphate which reacts with ammonia to form carbamoyl phosphate. This Halobacterium salinarum (strain ATCC 700922 / JCM 11081 / NRC-1) (Halobacterium halobium) protein is Carbamoyl phosphate synthase large chain.